The primary structure comprises 316 residues: Pseudouridine-5'-phosphate glycosidase (316 aa).

E31 acts as the Proton donor in catalysis. Substrate-binding residues include K92 and V112. Mn(2+) is bound at residue D144. 146-148 (SAD) lines the substrate pocket. The active-site Nucleophile is the K165.

Belongs to the pseudouridine-5'-phosphate glycosidase family. In terms of assembly, homotrimer. It depends on Mn(2+) as a cofactor.

The enzyme catalyses D-ribose 5-phosphate + uracil = psi-UMP + H2O. Catalyzes the reversible cleavage of pseudouridine 5'-phosphate (PsiMP) to ribose 5-phosphate and uracil. Functions biologically in the cleavage direction, as part of a pseudouridine degradation pathway. Part of an operon that could be involved in the biosynthesis of the blue pigment indigoidine, which is implicated in pathogenicity and protection from oxidative stress. The polypeptide is Pseudouridine-5'-phosphate glycosidase (Dickeya dadantii (strain 3937) (Erwinia chrysanthemi (strain 3937))).